The sequence spans 255 residues: Hydroxyacylglutathione hydrolase (255 aa).

The Zn(2+) site is built by H53, H55, D57, H58, H110, D127, and H165.

Belongs to the metallo-beta-lactamase superfamily. Glyoxalase II family. In terms of assembly, monomer. It depends on Zn(2+) as a cofactor.

It carries out the reaction an S-(2-hydroxyacyl)glutathione + H2O = a 2-hydroxy carboxylate + glutathione + H(+). It participates in secondary metabolite metabolism; methylglyoxal degradation; (R)-lactate from methylglyoxal: step 2/2. Its function is as follows. Thiolesterase that catalyzes the hydrolysis of S-D-lactoyl-glutathione to form glutathione and D-lactic acid. The chain is Hydroxyacylglutathione hydrolase from Xanthomonas campestris pv. campestris (strain 8004).